The chain runs to 448 residues: Protein chibby homolog 2 (448 aa).

Ser-41, Ser-86, Ser-89, Ser-97, Ser-124, Ser-144, Ser-148, and Ser-150 each carry phosphoserine. The stretch at 163 to 198 (AKEFVLQEENKSLREENKALREENRMLRKENKILQV) forms a coiled coil. The segment at 206-226 (SLGREESRPPSPLPQKDSASL) is disordered. Residues Ser-212 and Ser-225 each carry the phosphoserine modification. Positions 242–267 (KEDSTLQLLREENRALQQLLEQKQAY) form a coiled coil. The interval 270 to 321 (QTEDAAAPAEESKPAPSPHEEPCSPGLLQDQGSGLSSHFEEPRGPPAPQEDS) is disordered. Residues 279-291 (EESKPAPSPHEEP) show a composition bias toward basic and acidic residues. A phosphoserine mark is found at Ser-335 and Ser-338. Residues 356–414 (LQLLREMRQALQALLKENRLLQEENRTLQVLRAEHRGFQEENKALWENNKLKLQQKLVI) are a coiled coil.

The protein belongs to the chibby family. SPERT subfamily. Homodimer. Binds to NEK1.

The polypeptide is Protein chibby homolog 2 (CBY2) (Macaca fascicularis (Crab-eating macaque)).